Consider the following 755-residue polypeptide: MRPAPIALWLRLVLALALVRPRAVGWAPVRAPIYVSSWAVQVSQGNREVERLARKFGFVNLGPIFPDGQYFHLRHRGVVQQSLTPHWGHRLHLKKNPKVQWFQQQTLQRRVKRSVVVPTDPWFSKQWYMNSEAQPDLSILQAWSQGLSGQGIVVSVLDDGIEKDHPDLWANYDPLASYDFNDYDPDPQPRYTPSKENRHGTRCAGEVAAMANNGFCGVGVAFNARIGGVRMLDGTITDVIEAQSLSLQPQHIHIYSASWGPEDDGRTVDGPGILTREAFRRGVTKGRGGLGTLFIWASGNGGLHYDNCNCDGYTNSIHTLSVGSTTQQGRVPWYSEACASTLTTTYSSGVATDPQIVTTDLHHGCTDQHTGTSASAPLAAGMIALALEANPFLTWRDMQHLVVRASKPAHLQAEDWRTNGVGRQVSHHYGYGLLDAGLLVDTARTWLPTQPQRKCAVRVQSRPTPILPLIYIRENVSACAGLHNSIRSLEHVQAQLTLSYSRRGDLEISLTSPMGTRSTLVAIRPLDVSTEGYNNWVFMSTHFWDENPQGVWTLGLENKGYYFNTGTLYRYTLLLYGTAEDMTARPTGPQVTSSACVQRDTEGLCQACDGPAYILGQLCLAYCPPRFFNHTRLVTAGPGHTAAPALRVCSSCHASCYTCRGGSPRDCTSCPPSSTLDQQQGSCMGPTTPDSRPRLRAAACPHHRCPASAMVLSLLAVTLGGPVLCGMSMDLPLYAWLSRARATPTKPQVWLPAGT.

The first 25 residues, 1–25 (MRPAPIALWLRLVLALALVRPRAVG), serve as a signal peptide directing secretion. The propeptide occupies 26-113 (WAPVRAPIYV…QQTLQRRVKR (88 aa)). In terms of domain architecture, Peptidase S8 spans 126-440 (QWYMNSEAQP…YGLLDAGLLV (315 aa)). Catalysis depends on charge relay system residues Asp-158, His-199, and Ser-373. The region spanning 449–581 (TQPQRKCAVR…TLLLYGTAED (133 aa)) is the P/Homo B domain. Asn-475 and Asn-629 each carry an N-linked (GlcNAc...) asparagine glycan. Residues 709-729 (AMVLSLLAVTLGGPVLCGMSM) form a helical membrane-spanning segment.

It belongs to the peptidase S8 family. Furin subfamily. As to quaternary structure, the proPCSK4 form interacts with HSPA5; the interaction takes place at the endoplasmic reticulum. Post-translationally, N-glycosylated. Synthesized in the endoplasmic reticulum as a zymogen, is matured by autocatalytic cleavage between the prodomain and the catalytic domain. As to expression, placenta.

Its subcellular location is the membrane. It localises to the cytoplasmic vesicle. The protein resides in the secretory vesicle. The protein localises to the acrosome membrane. In terms of biological role, proprotein convertase involved in the processing of hormone and other protein precursors at sites comprised of pairs of basic amino acid residues. In males, important for ADAM2 processing as well as other acrosomal proteins with roles in fertilization and critical for normal fertilization events such as sperm capacitation, acrosome reaction and binding of sperm to zona pellucida. Also plays a role in female fertility, involved in the regulation of trophoblast migration and placental development, may be through the proteolytical processing and activation of proteins such as IGF2. May also participate in folliculogenesis in the ovaries. The polypeptide is Proprotein convertase subtilisin/kexin type 4 (Homo sapiens (Human)).